The following is a 567-amino-acid chain: Oxygen-dependent choline dehydrogenase (567 aa).

4–33 (DYIIIGAGSAGNVLAARLTEDADVTVLLLE) contributes to the FAD binding site. His-473 serves as the catalytic Proton acceptor.

This sequence belongs to the GMC oxidoreductase family. The cofactor is FAD.

It carries out the reaction choline + A = betaine aldehyde + AH2. The enzyme catalyses betaine aldehyde + NAD(+) + H2O = glycine betaine + NADH + 2 H(+). Its pathway is amine and polyamine biosynthesis; betaine biosynthesis via choline pathway; betaine aldehyde from choline (cytochrome c reductase route): step 1/1. Involved in the biosynthesis of the osmoprotectant glycine betaine. Catalyzes the oxidation of choline to betaine aldehyde and betaine aldehyde to glycine betaine at the same rate. The chain is Oxygen-dependent choline dehydrogenase from Yersinia pestis bv. Antiqua (strain Antiqua).